A 424-amino-acid chain; its full sequence is Probable serine/threonine-protein kinase PBL6 (424 aa).

The segment at 1 to 26 (MGCFGRTPKSNKRSDTKTTKNNDFTP) is disordered. A lipid anchor (N-myristoyl glycine) is attached at Gly-2. The S-palmitoyl cysteine moiety is linked to residue Cys-3. Thr-87 is subject to Phosphothreonine. The Protein kinase domain occupies 98–377 (FKSDCFLGEG…VVMALDHLAS (280 aa)). Residues 104–112 (LGEGGFGKV) and Lys-127 each bind ATP. Position 172 is a phosphotyrosine (Tyr-172). The active-site Proton acceptor is Asp-225. A phosphoserine mark is found at Ser-229 and Ser-259. Phosphothreonine is present on residues Thr-260 and Thr-265. Tyr-273 is subject to Phosphotyrosine.

It belongs to the protein kinase superfamily. Ser/Thr protein kinase family.

It localises to the cell membrane. It carries out the reaction L-seryl-[protein] + ATP = O-phospho-L-seryl-[protein] + ADP + H(+). The catalysed reaction is L-threonyl-[protein] + ATP = O-phospho-L-threonyl-[protein] + ADP + H(+). Functionally, may be involved in plant defense signaling. The sequence is that of Probable serine/threonine-protein kinase PBL6 from Arabidopsis thaliana (Mouse-ear cress).